Reading from the N-terminus, the 261-residue chain is General secretion pathway protein N (261 aa).

The Cytoplasmic portion of the chain corresponds to 1–10; that stretch reads MRLEMIGLRT. A helical membrane pass occupies residues 11–31; that stretch reads WLLATVVGWALLVCVLAVAGL. Topologically, residues 32 to 261 are periplasmic; the sequence is GKRVELLPDD…QGGSTPGQTQ (230 aa). The disordered stretch occupies residues 158–261; that stretch reads VFNGQGGQPP…QGGSTPGQTQ (104 aa). The segment covering 179-200 has biased composition (pro residues); it reads AVPPLPPNVPPAPATPAPPPAE. Residues 201–211 show a composition bias toward low complexity; that stretch reads VPQQQPGGQAP. Residues 227–244 are compositionally biased toward basic and acidic residues; sequence RPSDEQMRAIRERIEARR.

In terms of assembly, binds to XpsD.

Its subcellular location is the cell inner membrane. Involved in a general secretion pathway (GSP) for the export of proteins. This Xanthomonas campestris pv. campestris (strain ATCC 33913 / DSM 3586 / NCPPB 528 / LMG 568 / P 25) protein is General secretion pathway protein N (xpsN).